A 536-amino-acid polypeptide reads, in one-letter code: METSSSSPVKPRRKDKDEDGRAEQEDSADQVGEPHRKLLRLGDILETNEVLLNEAYQQPELTKWLQTAWTEEKSQGTKETQTGAQVFSDPFQICLLPGMLEKGQSQALVAEIIQKVQWSRKQMDLYEFYQSADLSNMPACRLLTNFLQVLRKQVRPWLEKVTNLKLDYVSASCSMYTCGDYLLVHDDLLKDRQVAFIYYLSPWEGAEEWTDEQGGCLEIFGSDDQCFPQFPVQRKIAPKDNQFAFFKVGSRSFHQVGEVTTFDYPRLTINGWFHGDTNEAFVADSLRAFPRLNYLQPDGLNRPPLGLFLNNVYLKGATRRSIQKRIEENSEICLYEFFKREKFELARSQLLADSDTLKWRRQGPANAHNYEVLDLTTARGTILELLQLFRSHAMFDLLRDFTDLDLAGTDAESPTCSVELQRWSHGNYTVLGDGLTSEENTLDLVYYLNAAEGAAVITYLAPDAEMPTAKAPTDGRRSDYDDEEEDDSVLLTITPVDNALNIVYRCEGTTKFTKYVSRNTPLEKGPVFVISCSYKE.

Residues 1 to 35 (METSSSSPVKPRRKDKDEDGRAEQEDSADQVGEPH) form a disordered region. Residues 14–24 (KDKDEDGRAEQ) show a composition bias toward basic and acidic residues. The 111-residue stretch at 165–275 (KLDYVSASCS…RLTINGWFHG (111 aa)) folds into the Fe2OG dioxygenase domain. Residues H185 and D187 each contribute to the Fe cation site. Y199 contacts 2-oxoglutarate. H254 lines the Fe cation pocket. 2-oxoglutarate is bound at residue R266. The segment at 467–486 (PTAKAPTDGRRSDYDDEEED) is disordered.

The protein belongs to the TPA1 family. In terms of assembly, monomer. Requires Fe(2+) as cofactor. It depends on L-ascorbate as a cofactor. In third-instar larval tissues,highly expressed in the fat body, with significant expression in other organs including the brain, salivary glands, imaginal disks and gut.

The protein localises to the nucleus. The protein resides in the cytoplasm. It catalyses the reaction [ribosomal protein uS12]-L-proline + 2-oxoglutarate + O2 = [ribosomal protein uS12]-(3S)-3-hydroxy-L-proline + succinate + CO2. Functionally, prolyl 3-hydroxylase that catalyzes 3-hydroxylation of 'Pro-62' of small ribosomal subunit uS12 (RpS23), thereby regulating protein translation termination efficiency. This Drosophila melanogaster (Fruit fly) protein is Prolyl 3-hydroxylase sudestada1 (sud1).